The following is a 316-amino-acid chain: Olfactory receptor 56B2 (316 aa).

The Extracellular portion of the chain corresponds to 1–32; the sequence is MVLQELRDSNSSKFQVSEFILMGFPGIHSWQH. The N-linked (GlcNAc...) asparagine glycan is linked to N10. A helical membrane pass occupies residues 33-53; it reads WLSLPLALLYLLALSANILIL. Residues 54–61 are Cytoplasmic-facing; that stretch reads IIINKEAA. The chain crosses the membrane as a helical span at residues 62–82; the sequence is LHQPMYYFLGILAMADIGLAT. Topologically, residues 83 to 106 are extracellular; that stretch reads TIMPKILAILWFNAKTISLLECFA. C104 and C196 form a disulfide bridge. A helical membrane pass occupies residues 107-127; that stretch reads QMYAIHCFVAMESSTFVCMAI. The Cytoplasmic portion of the chain corresponds to 128–146; that stretch reads DRYVAICRPLRYPSIITES. Residues 147–167 form a helical membrane-spanning segment; that stretch reads FVFKANGFMALRNSLCLISVP. Over 168-203 the chain is Extracellular; sequence LLAAQRHYCSQNQIEHCLCSNLGVTSLSCDDRRINS. Residues 204-224 form a helical membrane-spanning segment; sequence INQVLLAWTLMGSDLGLIILS. Over 225 to 244 the chain is Cytoplasmic; that stretch reads YALILYSVLKLNSPEAASKA. Residues 245–265 form a helical membrane-spanning segment; it reads LSTCTSHLILILFFYTVIIVI. Residues 266 to 279 are Extracellular-facing; that stretch reads SITRSTGMRVPLIP. A helical membrane pass occupies residues 280–300; that stretch reads VLLNVLHNVIPPALNPMVYAL. Residues 301–316 are Cytoplasmic-facing; the sequence is KNKELRQGLYKVLRLE.

Belongs to the G-protein coupled receptor 1 family.

Its subcellular location is the cell membrane. Its function is as follows. Odorant receptor. The sequence is that of Olfactory receptor 56B2 from Homo sapiens (Human).